A 432-amino-acid polypeptide reads, in one-letter code: D-amino acid dehydrogenase (432 aa).

3–17 provides a ligand contact to FAD; it reads VVILGSGVVGVASAW.

It belongs to the DadA oxidoreductase family. The cofactor is FAD.

The catalysed reaction is a D-alpha-amino acid + A + H2O = a 2-oxocarboxylate + AH2 + NH4(+). The protein operates within amino-acid degradation; D-alanine degradation; NH(3) and pyruvate from D-alanine: step 1/1. In terms of biological role, oxidative deamination of D-amino acids. In Klebsiella pneumoniae (strain 342), this protein is D-amino acid dehydrogenase.